Here is a 108-residue protein sequence, read N- to C-terminus: Envelope small membrane protein (108 aa).

The Virion surface portion of the chain corresponds to 1–10 (MNLLNKSLEE). The chain crosses the membrane as a helical span at residues 11 to 31 (NGSFLTALYIIVGFLALYLLG). Topologically, residues 32 to 108 (RALQAFVQAA…QDAQRDKLYS (77 aa)) are intravirion. The segment at 88–108 (NGWNNKNPANFQDAQRDKLYS) is disordered. The span at 89 to 100 (GWNNKNPANFQD) shows a compositional bias: polar residues.

The protein belongs to the gammacoronaviruses E protein family. Homooligomer. Interacts with the M membrane protein in the budding compartment of the host cell, which is located between endoplasmic reticulum and the Golgi complex. The cytoplasmic tails of both proteins are important for this function. Interacts with Nucleoprotein.

It localises to the host Golgi apparatus membrane. Its function is as follows. Plays a central role in virus morphogenesis and assembly. Acts as a viroporin and self-assembles in host membranes forming pentameric protein-lipid pores that allow ion transport. Also plays a role in the induction of apoptosis. This Gallus gallus (Chicken) protein is Envelope small membrane protein.